The primary structure comprises 331 residues: GTP 3',8-cyclase (331 aa).

The Radical SAM core domain maps to 6 to 234 (PFNRKIDYLR…PATGKSHDGP (229 aa)). Arginine 15 serves as a coordination point for GTP. Cysteine 22 and cysteine 26 together coordinate [4Fe-4S] cluster. Tyrosine 28 is an S-adenosyl-L-methionine binding site. Residue cysteine 29 participates in [4Fe-4S] cluster binding. Arginine 66 contributes to the GTP binding site. Glycine 70 is an S-adenosyl-L-methionine binding site. Serine 97 contributes to the GTP binding site. S-adenosyl-L-methionine is bound at residue serine 121. Lysine 158 is a binding site for GTP. Methionine 192 serves as a coordination point for S-adenosyl-L-methionine. Residues cysteine 258 and cysteine 261 each contribute to the [4Fe-4S] cluster site. 263-265 (RVR) lines the GTP pocket. Cysteine 275 is a binding site for [4Fe-4S] cluster.

This sequence belongs to the radical SAM superfamily. MoaA family. In terms of assembly, monomer and homodimer. [4Fe-4S] cluster serves as cofactor.

It catalyses the reaction GTP + AH2 + S-adenosyl-L-methionine = (8S)-3',8-cyclo-7,8-dihydroguanosine 5'-triphosphate + 5'-deoxyadenosine + L-methionine + A + H(+). It functions in the pathway cofactor biosynthesis; molybdopterin biosynthesis. Functionally, catalyzes the cyclization of GTP to (8S)-3',8-cyclo-7,8-dihydroguanosine 5'-triphosphate. The sequence is that of GTP 3',8-cyclase from Hydrogenovibrio crunogenus (strain DSM 25203 / XCL-2) (Thiomicrospira crunogena).